A 329-amino-acid chain; its full sequence is Carbohydrate sulfotransferase chst-1 (329 aa).

Residues 1 to 3 (MLK) are Cytoplasmic-facing. The chain crosses the membrane as a helical; Signal-anchor for type II membrane protein span at residues 4-23 (WFIISCCLLTAISYSTYYLF). The Lumenal portion of the chain corresponds to 24-329 (TSNSWIKTVK…FDFDTTFINS (306 aa)). Residues 91 to 97 (KKSMSTL) and 157 to 165 (RDPIARFIS) each bind 3'-phosphoadenylyl sulfate.

Belongs to the sulfotransferase 2 family. Highly expressed in the head and tail of hermaphrodites, in particular in amphid and phasmid sheath cells.

Its subcellular location is the golgi apparatus membrane. The catalysed reaction is chondroitin beta-D-glucuronate + n 3'-phosphoadenylyl sulfate = chondroitin 4'-sulfate + n adenosine 3',5'-bisphosphate + n H(+). Catalyzes the transfer of sulfate to position 4 of non-reducing N-acetylgalactosamine (GalNAc) residue of chondroitin. The protein is Carbohydrate sulfotransferase chst-1 of Caenorhabditis elegans.